We begin with the raw amino-acid sequence, 443 residues long: tRNA (guanine-N(7)-)-methyltransferase non-catalytic subunit TRM82 (443 aa).

The segment at 67-93 is disordered; sequence ASKKLKTNDGEPVAQPKKQAKVPKPGP. WD repeat units lie at residues 97–137, 193–235, and 239–279; these read PVYQ…KDNI, GHVS…IVDK, and GHEE…LLFK.

It belongs to the WD repeat TRM82 family. As to quaternary structure, forms a heterodimer with the catalytic subunit TRM8.

The protein localises to the nucleus. It participates in tRNA modification; N(7)-methylguanine-tRNA biosynthesis. Required for the formation of N(7)-methylguanine at position 46 (m7G46) in tRNA. In the complex, it is required to stabilize and induce conformational changes of the catalytic subunit. The chain is tRNA (guanine-N(7)-)-methyltransferase non-catalytic subunit TRM82 from Kluyveromyces lactis (strain ATCC 8585 / CBS 2359 / DSM 70799 / NBRC 1267 / NRRL Y-1140 / WM37) (Yeast).